Consider the following 670-residue polypeptide: Penicillin-binding protein activator LpoA (670 aa).

An N-terminal signal peptide occupies residues 1-26; that stretch reads MLPSKVVHRKAVRTVPLLLAALIFAG. The N-palmitoyl cysteine moiety is linked to residue Cys-27. Cys-27 is lipidated: S-diacylglycerol cysteine.

This sequence belongs to the LpoA family. In terms of assembly, interacts with PBP1a.

The protein localises to the cell outer membrane. Functionally, regulator of peptidoglycan synthesis that is essential for the function of penicillin-binding protein 1A (PBP1a). This chain is Penicillin-binding protein activator LpoA, found in Erwinia tasmaniensis (strain DSM 17950 / CFBP 7177 / CIP 109463 / NCPPB 4357 / Et1/99).